The sequence spans 301 residues: Uricase-2 isozyme 2 (301 aa).

Catalysis depends on charge relay system residues lysine 17 and threonine 63. The urate site is built by threonine 63, aspartate 64, phenylalanine 165, arginine 182, valine 237, glutamine 238, and asparagine 257. Histidine 259 functions as the Charge relay system in the catalytic mechanism. A Microbody targeting signal motif is present at residues 299–301 (SKL).

It belongs to the uricase family.

Its subcellular location is the peroxisome. The catalysed reaction is urate + O2 + H2O = 5-hydroxyisourate + H2O2. Its pathway is purine metabolism; urate degradation; (S)-allantoin from urate: step 1/3. Functionally, catalyzes the oxidation of uric acid to 5-hydroxyisourate, which is further processed to form (S)-allantoin. The protein is Uricase-2 isozyme 2 of Canavalia lineata (Beach bean).